The chain runs to 4377 residues: E3 ubiquitin-protein ligase HUWE1 (4377 aa).

2 positions are modified to phosphoserine: S648 and S649. Disordered regions lie at residues 706–758 (KADG…VVGT), 978–1001 (DEKA…AGSM), and 1018–1038 (TLAP…KSKI). Residues 725–735 (ASSEDEEEEEV) are compositionally biased toward acidic residues. Over residues 737–756 (AMQSFNSAQQNETEPNQQVV) the composition is skewed to polar residues. Phosphoserine is present on S740. A Phosphoserine modification is found at S1084. The segment covering 1291-1302 (LSKEKEGSRGEE) has biased composition (basic and acidic residues). The interval 1291–1320 (LSKEKEGSRGEEEAGQEEGGSRREPQVNQQ) is disordered. Residues 1316 to 1355 (QVNQQQLQQLMDMGFTREHAMEALLNTSTMEQATEYLLTH) form the UBA domain. Residues S1368, S1370, S1382, and S1395 each carry the phosphoserine modification. The region spanning 1370 to 1389 (SEEDQMMRAIAMSLGQDIPM) is the UIM domain. The tract at residues 1396 to 1415 (PEEVACRKEEEERKAREKQE) is disordered. One can recognise a WWE domain in the interval 1603–1680 (RAQMTKYLQS…ETGNRRPVML (78 aa)). Residues 1690–1733 (KNSKSSNGQELEKTLEESKETDIKHKENKGNDIPLALESTNTEK) are disordered. Over residues 1699–1719 (ELEKTLEESKETDIKHKENKG) the composition is skewed to basic and acidic residues. S1907 is modified (phosphoserine). 3 disordered regions span residues 2019–2065 (APAE…SKPL), 2262–2343 (SLFG…QEMQ), and 2355–2479 (LLER…ASPL). Polar residues predominate over residues 2022–2033 (ETSTTGTSQGEA). T2035 is subject to Phosphothreonine. Basic and acidic residues predominate over residues 2037 to 2057 (EETREGKKDKEGDRTSEEGKQ). 2 stretches are compositionally biased toward low complexity: residues 2262–2271 (SLFGSKSASS) and 2278–2291 (DAQG…SHQQ). S2266 carries the post-translational modification Phosphoserine. An N6-acetyllysine modification is found at K2267. 2 stretches are compositionally biased toward acidic residues: residues 2295-2306 (EPGEAEVQEEDH) and 2314-2325 (ADGDIMDGEAET). Phosphoserine occurs at positions 2362, 2365, and 2391. Residues 2388–2398 (SNLSQASTLQA) are compositionally biased toward polar residues. The span at 2408–2472 (DPEDEEEHTQ…SEMELDEDYP (65 aa)) shows a compositional bias: acidic residues. Phosphoserine is present on residues S2527, S2532, and S2535. Residue T2554 is modified to Phosphothreonine. Residues S2584, S2595, and S2619 each carry the phosphoserine modification. A compositionally biased stretch (basic and acidic residues) spans 2704–2716 (IIDKGKEDKENRD). 3 disordered regions span residues 2704–2970 (IIDK…GVDP), 2991–3012 (IRPP…VGNP), and 3036–3059 (QQRA…MDPV). Positions 2717–2736 (QSAQCTVTKTNDSTEQNVSD) are enriched in polar residues. The segment covering 2738 to 2756 (TPMPDSYPTTPSSTDAPTS) has biased composition (low complexity). At T2751 the chain carries Phosphothreonine. Composition is skewed to polar residues over residues 2818–2835 (AETT…TSLS), 2847–2864 (AVSS…SLAS), and 2877–2890 (AGSS…SSTP). A phosphoserine mark is found at S2826, S2833, S2835, S2861, S2887, and S2888. T2889 is subject to Phosphothreonine. Low complexity-rich tracts occupy residues 2913-2932 (PPED…RDSA) and 2993-3007 (PPTR…SAPA). S2918 carries the phosphoserine modification. Phosphoserine is present on residues S3116, S3117, S3122, S3127, and S3135. Position 3149 is an omega-N-methylarginine (R3149). Disordered regions lie at residues 3243-3266 (PKLS…SHEN), 3352-3383 (TQQR…SSSS), 3405-3429 (GKNS…SLEA), 3471-3514 (SEVQ…TTPV), and 3539-3566 (TPTT…EGGS). The span at 3355-3369 (RTKETNCESDRERGS) shows a compositional bias: basic and acidic residues. A compositionally biased stretch (low complexity) spans 3370–3383 (KQACSPCSSQSSSS). Low complexity-rich tracts occupy residues 3475–3503 (TNSS…ATAP) and 3539–3552 (TPTT…TSTT). 6 positions are modified to phosphoserine: S3557, S3663, S3753, S3758, S3760, and S3761. Positions 3738–3759 (TRRANKKAKQTGRLGSSGLGSA) are disordered. A compositionally biased stretch (low complexity) spans 3749-3759 (GRLGSSGLGSA). Disordered stretches follow at residues 3782 to 3850 (EGQR…LPLL) and 3897 to 3951 (RESK…SSSL). The span at 3794-3803 (TSESSNQSET) shows a compositional bias: polar residues. Phosphoserine occurs at positions 3810, 3818, and 3830. The span at 3817–3828 (PSPSAQDTQSIV) shows a compositional bias: polar residues. Residue T3833 is modified to Phosphothreonine. 2 stretches are compositionally biased toward basic and acidic residues: residues 3836–3845 (GEKEKEEKPP) and 3897–3918 (RESK…KDEP). Phosphoserine is present on residues S3909 and S3922. The span at 3919–3928 (PPLSPAPLTP) shows a compositional bias: pro residues. A phosphothreonine mark is found at T3927 and T3930. Over residues 3941–3951 (EPSSMHISSSL) the composition is skewed to polar residues. In terms of domain architecture, HECT spans 4041–4377 (SPEEMKNRLY…QECSEGFGLA (337 aa)). At Y4274 the chain carries Phosphotyrosine. The active-site Glycyl thioester intermediate is the C4344.

Belongs to the UPL family. TOM1/PTR1 subfamily. As to quaternary structure, interacts with isoform p19ARF of CDKN2A which strongly inhibits HUWE1 ubiquitin ligase activity. Interacts with MYCN, POLB and CDC6. Interacts with PA2G4. Interacts with NR1D1. Interacts with AMBRA1. Interacts with HAPSTR1. Interacts with HAPSTR2. In hepatocytes, interacts with PAQR3; the interaction promotes PPARA poylubiquitination and STUB1-mediated degradation. In terms of processing, phosphorylated on tyrosine; phosphorylation is probably required for its ability to inhibit TP53 transactivation. Widely expressed.

Its subcellular location is the cytoplasm. The protein resides in the nucleus. It localises to the mitochondrion. It catalyses the reaction S-ubiquitinyl-[E2 ubiquitin-conjugating enzyme]-L-cysteine + [acceptor protein]-L-lysine = [E2 ubiquitin-conjugating enzyme]-L-cysteine + N(6)-ubiquitinyl-[acceptor protein]-L-lysine.. Its pathway is protein modification; protein ubiquitination. Functionally, E3 ubiquitin-protein ligase which mediates ubiquitination and subsequent proteasomal degradation of target proteins. Regulates apoptosis by catalyzing the polyubiquitination and degradation of MCL1. Mediates monoubiquitination of DNA polymerase beta (POLB) at 'Lys-41', 'Lys-61' and 'Lys-81', thereby playing a role in base-excision repair. Also ubiquitinates the p53/TP53 tumor suppressor and core histones including H1, H2A, H2B, H3 and H4. Ubiquitinates MFN2 to negatively regulate mitochondrial fusion in response to decreased stearoylation of TFRC. Ubiquitination of MFN2 also takes place following induction of mitophagy; AMBRA1 acts as a cofactor for HUWE1-mediated ubiquitination. Regulates neural differentiation and proliferation by catalyzing the polyubiquitination and degradation of MYCN. May regulate abundance of CDC6 after DNA damage by polyubiquitinating and targeting CDC6 to degradation. Mediates polyubiquitination of PA2G4. Acts in concert with MYCBP2 to regulate the circadian clock gene expression by promoting the lithium-induced ubiquination and degradation of NR1D1. Binds to an upstream initiator-like sequence in the preprodynorphin gene. Mediates HAPSTR1 degradation, but is also a required cofactor in the pathway by which HAPSTR1 governs stress signaling. Acts as a regulator of the JNK and NF-kappa-B signaling pathways by mediating assembly of heterotypic 'Lys-63'-/'Lys-48'-linked branched ubiquitin chains that are then recognized by TAB2: HUWE1 mediates branching of 'Lys-48'-linked chains of substrates initially modified with 'Lys-63'-linked conjugates by TRAF6. 'Lys-63'-/'Lys-48'-linked branched ubiquitin chains protect 'Lys-63'-linkages from CYLD deubiquitination. Ubiquitinates PPARA in hepatocytes. The polypeptide is E3 ubiquitin-protein ligase HUWE1 (Huwe1) (Mus musculus (Mouse)).